A 245-amino-acid chain; its full sequence is Ubiquinone biosynthesis O-methyltransferase (245 aa).

Arg49, Gly69, Asp90, and Met134 together coordinate S-adenosyl-L-methionine.

The protein belongs to the methyltransferase superfamily. UbiG/COQ3 family.

It catalyses the reaction a 3-demethylubiquinol + S-adenosyl-L-methionine = a ubiquinol + S-adenosyl-L-homocysteine + H(+). The catalysed reaction is a 3-(all-trans-polyprenyl)benzene-1,2-diol + S-adenosyl-L-methionine = a 2-methoxy-6-(all-trans-polyprenyl)phenol + S-adenosyl-L-homocysteine + H(+). It functions in the pathway cofactor biosynthesis; ubiquinone biosynthesis. Its function is as follows. O-methyltransferase that catalyzes the 2 O-methylation steps in the ubiquinone biosynthetic pathway. This Vibrio cholerae serotype O1 (strain ATCC 39541 / Classical Ogawa 395 / O395) protein is Ubiquinone biosynthesis O-methyltransferase.